A 282-amino-acid chain; its full sequence is Nucleotide-binding protein XCC2806 (282 aa).

Residue 5–12 (GLSGSGKS) coordinates ATP. Position 57-60 (57-60 (DVRS)) interacts with GTP.

This sequence belongs to the RapZ-like family.

Displays ATPase and GTPase activities. The polypeptide is Nucleotide-binding protein XCC2806 (Xanthomonas campestris pv. campestris (strain ATCC 33913 / DSM 3586 / NCPPB 528 / LMG 568 / P 25)).